Here is a 180-residue protein sequence, read N- to C-terminus: Hypoxanthine-guanine phosphoribosyltransferase (180 aa).

Diphosphate-binding residues include Lys43 and Gly44. The Mg(2+) site is built by Glu99 and Asp100. Catalysis depends on Asp103, which acts as the Proton acceptor. GMP is bound by residues Lys131, 152–153 (FV), and Asp159. A diphosphate-binding site is contributed by Arg165.

This sequence belongs to the purine/pyrimidine phosphoribosyltransferase family. Requires Mg(2+) as cofactor.

Its subcellular location is the cytoplasm. The catalysed reaction is IMP + diphosphate = hypoxanthine + 5-phospho-alpha-D-ribose 1-diphosphate. It carries out the reaction GMP + diphosphate = guanine + 5-phospho-alpha-D-ribose 1-diphosphate. It functions in the pathway purine metabolism; IMP biosynthesis via salvage pathway; IMP from hypoxanthine: step 1/1. The protein operates within purine metabolism; GMP biosynthesis via salvage pathway; GMP from guanine: step 1/1. In terms of biological role, purine salvage pathway enzyme that catalyzes the transfer of the ribosyl-5-phosphate group from 5-phospho-alpha-D-ribose 1-diphosphate (PRPP) to the N9 position of the 6-oxopurines hypoxanthine and guanine to form the corresponding ribonucleotides IMP (inosine 5'-monophosphate) and GMP (guanosine 5'-monophosphate), with the release of PPi. The protein is Hypoxanthine-guanine phosphoribosyltransferase (hprT) of Bacillus subtilis (strain 168).